The chain runs to 144 residues: Nucleoside diphosphate kinase (144 aa).

Residues Lys11, Phe59, Arg87, Thr93, Arg104, and Asn114 each contribute to the ATP site. The Pros-phosphohistidine intermediate role is filled by His117.

This sequence belongs to the NDK family. As to quaternary structure, homotetramer. Requires Mg(2+) as cofactor.

The protein resides in the cytoplasm. It catalyses the reaction a 2'-deoxyribonucleoside 5'-diphosphate + ATP = a 2'-deoxyribonucleoside 5'-triphosphate + ADP. It carries out the reaction a ribonucleoside 5'-diphosphate + ATP = a ribonucleoside 5'-triphosphate + ADP. Functionally, major role in the synthesis of nucleoside triphosphates other than ATP. The ATP gamma phosphate is transferred to the NDP beta phosphate via a ping-pong mechanism, using a phosphorylated active-site intermediate. In Vibrio atlanticus (strain LGP32) (Vibrio splendidus (strain Mel32)), this protein is Nucleoside diphosphate kinase.